We begin with the raw amino-acid sequence, 293 residues long: MKPIVGSIVALVTPMHEDGSVDYPSLRRLIDWHIAEGTDCIGVVGTTGESPTVAPEEHCEIIRVAVEHVAGRVPVMAGAGANSTREAIELSRYAKQVGADCTLQVVPYYNKPTQEGQYQHFRSIAEAVDIPVVLYNVPGRTVADMLPETVLRLAQVPGIVGLKEATGNIERACWLIKQAPKGFSIYSGDDPTAVALMLLGGHGNVSVTANVAPRAMHELCVAAMAGDAKRAAKIHLALLPLHKQLFCEPNPIPVKWALQRMGRCGGALRLPLTPLSAALQPVVEQSLRDAGLL.

Thr47 contributes to the pyruvate binding site. Catalysis depends on Tyr135, which acts as the Proton donor/acceptor. The active-site Schiff-base intermediate with substrate is the Lys163. Val205 provides a ligand contact to pyruvate.

The protein belongs to the DapA family. Homotetramer; dimer of dimers.

The protein resides in the cytoplasm. The enzyme catalyses L-aspartate 4-semialdehyde + pyruvate = (2S,4S)-4-hydroxy-2,3,4,5-tetrahydrodipicolinate + H2O + H(+). Its pathway is amino-acid biosynthesis; L-lysine biosynthesis via DAP pathway; (S)-tetrahydrodipicolinate from L-aspartate: step 3/4. Catalyzes the condensation of (S)-aspartate-beta-semialdehyde [(S)-ASA] and pyruvate to 4-hydroxy-tetrahydrodipicolinate (HTPA). The chain is 4-hydroxy-tetrahydrodipicolinate synthase from Methylibium petroleiphilum (strain ATCC BAA-1232 / LMG 22953 / PM1).